A 134-amino-acid chain; its full sequence is Large ribosomal subunit protein uL22 (134 aa).

It belongs to the universal ribosomal protein uL22 family. In terms of assembly, part of the 50S ribosomal subunit.

This protein binds specifically to 23S rRNA; its binding is stimulated by other ribosomal proteins, e.g. L4, L17, and L20. It is important during the early stages of 50S assembly. It makes multiple contacts with different domains of the 23S rRNA in the assembled 50S subunit and ribosome. Its function is as follows. The globular domain of the protein is located near the polypeptide exit tunnel on the outside of the subunit, while an extended beta-hairpin is found that lines the wall of the exit tunnel in the center of the 70S ribosome. The chain is Large ribosomal subunit protein uL22 from Karelsulcia muelleri (strain GWSS) (Sulcia muelleri).